Reading from the N-terminus, the 508-residue chain is Erythropoietin receptor (508 aa).

Positions Met-1 to Trp-24 are cleaved as a signal peptide. At Ala-25–Pro-250 the chain is on the extracellular side. Cysteines 52 and 62 form a disulfide. Asn-76 is a glycosylation site (N-linked (GlcNAc...) asparagine). The cysteines at positions 91 and 107 are disulfide-linked. Residues Ala-147 to Asp-247 enclose the Fibronectin type-III domain. The WSXWS motif signature appears at Trp-233–Ser-237. The chain crosses the membrane as a helical span at residues Leu-251 to Ser-273. Topologically, residues His-274–Ser-508 are cytoplasmic. Residue Lys-281 forms a Glycyl lysine isopeptide (Lys-Gly) (interchain with G-Cter in ubiquitin) linkage. Positions Ile-282–Glu-290 match the Box 1 motif motif. 2 positions are modified to phosphotyrosine; by JAK2: Tyr-368 and Tyr-426. Positions Leu-452 to Leu-457 match the ITIM motif motif. A Glycyl lysine isopeptide (Lys-Gly) (interchain with G-Cter in ubiquitin) cross-link involves residue Lys-453. Phosphotyrosine; by JAK2 is present on residues Tyr-454, Tyr-456, Tyr-468, Tyr-485, Tyr-489, and Tyr-504. A required for high-affinity SOCS3 binding region spans residues Tyr-454–Tyr-456. The disordered stretch occupies residues Asp-467–Ile-494.

It belongs to the type I cytokine receptor family. Type 1 subfamily. In terms of assembly, forms homodimers on EPO stimulation. The tyrosine-phosphorylated form interacts with several SH2 domain-containing proteins including LYN, the adapter protein SH2B2, PTPN6, PTPN11, JAK2, PI3 kinases, STAT5A/B, SOCS3, CRKL. Interacts with INPP5D/SHIP1. SH2B2 binding inhibits the JAK-STAT signaling. Interacts with RHEX; this interaction occurs in a erythropoietin (EPO)-dependent manner. Interacts with ATXN2L. Post-translationally, on EPO stimulation, phosphorylated on C-terminal tyrosine residues by JAK2. The phosphotyrosine motifs are also recruitment sites for several SH2-containing proteins and adapter proteins which mediate cell proliferation. Phosphorylation on Tyr-454 is required for PTPN6 interaction, Tyr-426 for PTPN11. Tyr-426 is also required for SOCS3 binding, but Tyr-454/Tyr-456 motif is the preferred binding site. In terms of processing, ubiquitinated by the ECS(SOCS2) complex following ligand-binding and phosphorylation by JAK2, leading to its degradation by the proteasome. Regulation by the ECS(SOCS2) complex acts as a negative feedback loop of erythropoietin-mediated signaling pathway. Ubiquitination at Lys-281 mediates receptor internalization, whereas ubiquitination at Lys-453 promotes trafficking of activated receptors to the lysosomes for degradation. Ubiquitinated by NOSIP; appears to be either multi-monoubiquitinated or polyubiquitinated. Ubiquitination mediates proliferation and survival of EPO-dependent cells. Erythroid cells and erythroid progenitor cells. As to expression, isoform EPOR-F is the most abundant form in EPO-dependent erythroleukemia cells and in late-stage erythroid progenitors. In terms of tissue distribution, isoform EPOR-S and isoform EPOR-T are the predominant forms in bone marrow. Isoform EPOR-S and isoform EPOR-T are the predominant forms in bone marrow. Isoform EPOR-T is the most abundant from in early-stage erythroid progenitor cells.

Its subcellular location is the cell membrane. It is found in the secreted. Receptor for erythropoietin, which mediates erythropoietin-induced erythroblast proliferation and differentiation. Upon EPO stimulation, EPOR dimerizes triggering the JAK2/STAT5 signaling cascade. In some cell types, can also activate STAT1 and STAT3. May also activate the LYN tyrosine kinase. In terms of biological role, acts as a dominant-negative receptor of EPOR-mediated signaling. The sequence is that of Erythropoietin receptor from Homo sapiens (Human).